The primary structure comprises 558 residues: Arginine--tRNA ligase (558 aa).

The 'HIGH' region signature appears at 119–129; that stretch reads ANPDGPLHVGH.

The protein belongs to the class-I aminoacyl-tRNA synthetase family.

It is found in the cytoplasm. It catalyses the reaction tRNA(Arg) + L-arginine + ATP = L-arginyl-tRNA(Arg) + AMP + diphosphate. The chain is Arginine--tRNA ligase from Methanothrix thermoacetophila (strain DSM 6194 / JCM 14653 / NBRC 101360 / PT) (Methanosaeta thermophila).